The sequence spans 254 residues: Protein EFFECTOR OF TRANSCRIPTION 3 (254 aa).

Positions 103 to 152 constitute a GIY-YIG domain; it reads RCTGLYELGVGVIGQDQGQNFDPDNNVLGVYVGQCVDVKSRLQDYGRRGG.

Its subcellular location is the cytoplasm. The polypeptide is Protein EFFECTOR OF TRANSCRIPTION 3 (Arabidopsis thaliana (Mouse-ear cress)).